Here is a 306-residue protein sequence, read N- to C-terminus: Protoheme IX farnesyltransferase (306 aa).

8 helical membrane passes run 31 to 50 (VIEL…QGGW), 55 to 77 (LILG…NCYI), 104 to 124 (LVFA…ISNW), 125 to 145 (LAAA…TLWL), 168 to 188 (WAAV…IVFL), 218 to 235 (GRAA…ATLA), 238 to 258 (LLLI…LAGG), and 286 to 306 (ASIS…LLPF).

The protein belongs to the UbiA prenyltransferase family. Protoheme IX farnesyltransferase subfamily.

The protein resides in the cell membrane. It carries out the reaction heme b + (2E,6E)-farnesyl diphosphate + H2O = Fe(II)-heme o + diphosphate. Its pathway is porphyrin-containing compound metabolism; heme O biosynthesis; heme O from protoheme: step 1/1. Converts heme B (protoheme IX) to heme O by substitution of the vinyl group on carbon 2 of heme B porphyrin ring with a hydroxyethyl farnesyl side group. This Clavibacter michiganensis subsp. michiganensis (strain NCPPB 382) protein is Protoheme IX farnesyltransferase.